We begin with the raw amino-acid sequence, 175 residues long: Large ribosomal subunit protein uL18 (175 aa).

It belongs to the universal ribosomal protein uL18 family. Part of the 50S ribosomal subunit. Contacts the 5S and 23S rRNAs.

This is one of the proteins that bind and probably mediate the attachment of the 5S RNA into the large ribosomal subunit, where it forms part of the central protuberance. The chain is Large ribosomal subunit protein uL18 from Methanoculleus marisnigri (strain ATCC 35101 / DSM 1498 / JR1).